A 57-amino-acid chain; its full sequence is Large ribosomal subunit protein eL20 (57 aa).

Over residues 1–10 (MSEFTVTGTF) the composition is skewed to polar residues. The segment at 1-21 (MSEFTVTGTFESRDGNQPFEK) is disordered.

It belongs to the eukaryotic ribosomal protein eL20 family. Part of the 50S ribosomal subunit. Binds 23S rRNA.

In Halomicrobium mukohataei (strain ATCC 700874 / DSM 12286 / JCM 9738 / NCIMB 13541) (Haloarcula mukohataei), this protein is Large ribosomal subunit protein eL20.